The sequence spans 152 residues: Protein ripply3 (152 aa).

Residues 1–24 (MRPEAAGVREARGRLCHCPGDDPG) are compositionally biased toward basic and acidic residues. Disordered regions lie at residues 1 to 76 (MRPE…GAFG) and 113 to 152 (FYND…ERAE). A WRPW motif motif is present at residues 40–43 (WRPW). Residues 79–114 (HPVRLYLPVSKRQEYLQSSGEKVLASFPVQATIHFY) form a ripply homology domain region. Acidic residues predominate over residues 116–130 (DDSESGSEEEQEEEA). Positions 140-152 (AEVRDSAQEERAE) are enriched in basic and acidic residues.

This sequence belongs to the ripply family. In terms of assembly, interacts with TBX1.

Its subcellular location is the nucleus. In terms of biological role, acts as a transcriptional corepressor. Negative regulator of the transcriptional activity of TBX1. Plays a role in the development of the pharyngeal apparatus and derivatives. In Mus musculus (Mouse), this protein is Protein ripply3 (Ripply3).